Consider the following 759-residue polypeptide: Glycerophosphodiester phosphodiesterase GDPDL3 (759 aa).

A signal peptide spans 1–27 (MRGLLRASSLLLCGVILIQLLAAQIHA). Over 28–738 (QSKKPKSPWP…TNAQAPSGQT (711 aa)) the chain is Extracellular. Positions 44–344 (PLVIARGGFS…DFPITASASL (301 aa)) constitute a GP-PDE 1 domain. N-linked (GlcNAc...) asparagine glycosylation is found at N99, N186, N242, N251, N326, N353, N413, N424, N488, N528, N540, and N647. The GP-PDE 2 domain maps to 360–661 (FLVITKDGAS…EFPFTAARYK (302 aa)). Residues 702–734 (FTDADVTEPPLPPVTAKAPTSSPGTPSTNAQAP) are disordered. Residues 719–734 (APTSSPGTPSTNAQAP) show a composition bias toward polar residues. Residues 739–759 (RITLSLLLSVFAMVLASLLLL) form a helical membrane-spanning segment.

The protein belongs to the glycerophosphoryl diester phosphodiesterase family. In terms of tissue distribution, expressed in roots, shoots, rosette and cauline leaves, stems, flowers and siliques.

Its subcellular location is the cell membrane. It carries out the reaction a sn-glycero-3-phosphodiester + H2O = an alcohol + sn-glycerol 3-phosphate + H(+). Involved in primary cell wall organization. Required for the accumulation of crystalline cellulose. The chain is Glycerophosphodiester phosphodiesterase GDPDL3 from Arabidopsis thaliana (Mouse-ear cress).